The following is a 213-amino-acid chain: Orotate phosphoribosyltransferase (213 aa).

5-phospho-alpha-D-ribose 1-diphosphate is bound at residue Lys26. 34–35 (FF) contacts orotate. 5-phospho-alpha-D-ribose 1-diphosphate is bound by residues 72–73 (YK), Arg99, Lys100, Lys103, His105, and 124–132 (DDVITAGTA). Orotate is bound by residues Thr128 and Arg156.

It belongs to the purine/pyrimidine phosphoribosyltransferase family. PyrE subfamily. As to quaternary structure, homodimer. The cofactor is Mg(2+).

The enzyme catalyses orotidine 5'-phosphate + diphosphate = orotate + 5-phospho-alpha-D-ribose 1-diphosphate. It functions in the pathway pyrimidine metabolism; UMP biosynthesis via de novo pathway; UMP from orotate: step 1/2. Its function is as follows. Catalyzes the transfer of a ribosyl phosphate group from 5-phosphoribose 1-diphosphate to orotate, leading to the formation of orotidine monophosphate (OMP). This chain is Orotate phosphoribosyltransferase, found in Vibrio vulnificus (strain YJ016).